A 440-amino-acid polypeptide reads, in one-letter code: Glutamyl-tRNA reductase (440 aa).

Residues 40-43, serine 100, 105-107, and glutamine 111 contribute to the substrate site; these read TCNR and ERE. Catalysis depends on cysteine 41, which acts as the Nucleophile. 181-186 serves as a coordination point for NADP(+); that stretch reads GTGAYA.

The protein belongs to the glutamyl-tRNA reductase family. Homodimer.

The catalysed reaction is (S)-4-amino-5-oxopentanoate + tRNA(Glu) + NADP(+) = L-glutamyl-tRNA(Glu) + NADPH + H(+). Its pathway is porphyrin-containing compound metabolism; protoporphyrin-IX biosynthesis; 5-aminolevulinate from L-glutamyl-tRNA(Glu): step 1/2. Catalyzes the NADPH-dependent reduction of glutamyl-tRNA(Glu) to glutamate 1-semialdehyde (GSA). The sequence is that of Glutamyl-tRNA reductase from Renibacterium salmoninarum (strain ATCC 33209 / DSM 20767 / JCM 11484 / NBRC 15589 / NCIMB 2235).